Here is a 296-residue protein sequence, read N- to C-terminus: Pyruvate synthase subunit PorB (296 aa).

Positions 17, 20, and 45 each coordinate [4Fe-4S] cluster. Polar residues predominate over residues 140–150 (TPFDASTTTTP). Residues 140–159 (TPFDASTTTTPAGKVSFGNP) are disordered. Residue Cys-210 participates in [4Fe-4S] cluster binding.

In terms of assembly, heterotetramer of one alpha, one beta, one delta and one gamma chain. It depends on [4Fe-4S] cluster as a cofactor.

It catalyses the reaction 2 oxidized [2Fe-2S]-[ferredoxin] + pyruvate + CoA = 2 reduced [2Fe-2S]-[ferredoxin] + acetyl-CoA + CO2 + H(+). This Methanosarcina barkeri (strain Fusaro / DSM 804) protein is Pyruvate synthase subunit PorB (porB).